A 509-amino-acid polypeptide reads, in one-letter code: Steroid 17-alpha-hydroxylase/17,20 lyase (509 aa).

Residue N202 coordinates substrate. C442 contributes to the heme binding site.

It belongs to the cytochrome P450 family. Heme serves as cofactor.

The protein localises to the endoplasmic reticulum membrane. It localises to the microsome membrane. It carries out the reaction a C21-steroid + reduced [NADPH--hemoprotein reductase] + O2 = a 17alpha-hydroxy-C21-steroid + oxidized [NADPH--hemoprotein reductase] + H2O + H(+). The catalysed reaction is progesterone + reduced [NADPH--hemoprotein reductase] + O2 = 17alpha-hydroxyprogesterone + oxidized [NADPH--hemoprotein reductase] + H2O + H(+). It catalyses the reaction pregnenolone + reduced [NADPH--hemoprotein reductase] + O2 = 17alpha-hydroxypregnenolone + oxidized [NADPH--hemoprotein reductase] + H2O + H(+). The enzyme catalyses 17alpha-hydroxyprogesterone + reduced [NADPH--hemoprotein reductase] + O2 = androst-4-ene-3,17-dione + acetate + oxidized [NADPH--hemoprotein reductase] + H2O + 2 H(+). It carries out the reaction 17alpha-hydroxyprogesterone + reduced [NADPH--hemoprotein reductase] + O2 = 16alpha,17alpha-dihydroxyprogesterone + oxidized [NADPH--hemoprotein reductase] + H2O + H(+). The catalysed reaction is 16alpha,17alpha-dihydroxyprogesterone + reduced [NADPH--hemoprotein reductase] + O2 = 6beta,16alpha,17alpha-trihydroxyprogesterone + oxidized [NADPH--hemoprotein reductase] + H2O + H(+). It catalyses the reaction 17alpha-hydroxypregnenolone + reduced [NADPH--hemoprotein reductase] + O2 = 3beta-hydroxyandrost-5-en-17-one + acetate + oxidized [NADPH--hemoprotein reductase] + H2O + 2 H(+). The enzyme catalyses 16alpha,17alpha-dihydroxypregnenolone + reduced [NADPH--hemoprotein reductase] + O2 = 3beta,16alpha-dihydroxy-androst-5-en-17-one + acetate + oxidized [NADPH--hemoprotein reductase] + H2O + 2 H(+). It carries out the reaction 3beta-hydroxyandrost-5-en-17-one + reduced [NADPH--hemoprotein reductase] + O2 = 3beta,16alpha-dihydroxy-androst-5-en-17-one + oxidized [NADPH--hemoprotein reductase] + H2O + H(+). The catalysed reaction is androst-4-ene-3,17-dione + reduced [NADPH--hemoprotein reductase] + O2 = 16alpha-hydroxyandrost-4-ene-3,17-dione + oxidized [NADPH--hemoprotein reductase] + H2O + H(+). Its pathway is steroid hormone biosynthesis. The protein operates within steroid biosynthesis; glucocorticoid biosynthesis. Regulated predominantly by intracellular cAMP levels. The 17,20-lyase activity is stimulated by cytochrome b5, which acts as an allosteric effector increasing the Vmax of the lyase activity. Its function is as follows. A cytochrome P450 monooxygenase involved in corticoid and androgen biosynthesis. Catalyzes 17-alpha hydroxylation of C21 steroids, which is common for both pathways. A second oxidative step, required only for androgen synthesis, involves an acyl-carbon cleavage. The 17-alpha hydroxy intermediates, as part of adrenal glucocorticoids biosynthesis pathway, are precursors of cortisol. Hydroxylates steroid hormones, pregnenolone and progesterone to form 17-alpha hydroxy metabolites, followed by the cleavage of the C17-C20 bond to form C19 steroids, dehydroepiandrosterone (DHEA) and androstenedione. Has 16-alpha hydroxylase activity. Catalyzes 16-alpha hydroxylation of 17-alpha hydroxy pregnenolone, followed by the cleavage of the C17-C20 bond to form 16-alpha-hydroxy DHEA. Also 16-alpha hydroxylates androgens, relevant for estriol synthesis. Mechanistically, uses molecular oxygen inserting one oxygen atom into a substrate, and reducing the second into a water molecule, with two electrons provided by NADPH via cytochrome P450 reductase (CPR; NADPH-ferrihemoprotein reductase). The chain is Steroid 17-alpha-hydroxylase/17,20 lyase (CYP17A1) from Capra hircus (Goat).